The following is a 74-amino-acid chain: Protein kish-B (74 aa).

The N-terminal stretch at 1-22 is a signal peptide; the sequence is MTNVYSLDGILVFGLLFVCTCA. Over 23–52 the chain is Extracellular; it reads YFKKVPRLKTWLLSEKKGVWGVFYKAAVIG. A helical transmembrane segment spans residues 53–73; the sequence is TRLHAAVAIACIVMAFYVLFI. Position 74 (K74) is a topological domain, cytoplasmic.

This sequence belongs to the KISH family.

The protein resides in the golgi apparatus membrane. Involved in the early part of the secretory pathway. The chain is Protein kish-B (TMEM167B) from Bos taurus (Bovine).